Here is a 306-residue protein sequence, read N- to C-terminus: Mitochondrial substrate carrier family protein ucpA (306 aa).

At 1–15 the chain is on the mitochondrial intermembrane side; sequence MSVNLNNNKNNKNKV. Solcar repeat units lie at residues 13-103, 112-204, and 211-301; these read NKVA…ISNA, YFFL…CKNL, and DGIY…FKKL. A helical transmembrane segment spans residues 16-36; it reads AIGFISGSLASICATTVTNPI. The Mitochondrial matrix portion of the chain corresponds to 37-83; sequence ELVKTRLQLQGELQLSQRIYNGVWDAFKQIYKTEGIRGLQSGLIPAY. The helical transmembrane segment at 84–103 threads the bilayer; the sequence is FSQATMQGIRLGSFDLISNA. Residues 104–117 are Mitochondrial intermembrane-facing; sequence LGAKPNQDYFFLKN. The helical transmembrane segment at 118 to 138 threads the bilayer; it reads LLAGATAGAIGAAAGSPFDLV. At 139 to 174 the chain is on the mitochondrial matrix side; sequence KVRMQAANMYKNDPQFVGYSSSFAAFKQIIQKEGFK. A helical transmembrane segment spans residues 175–195; the sequence is GLTRGMLTSAQRTAVGSAIQL. Over 196 to 211 the chain is Mitochondrial intermembrane; it reads STYGSCKNLVLNFVDD. Residues 212–232 traverse the membrane as a helical segment; the sequence is GIYAYIISSMVAGFIVTFGMN. Topologically, residues 233 to 276 are mitochondrial matrix; sequence PFDVARTRLYFQGKGNSHGEIYKGLMDCVYKTVKKEGFGAVYKG. A helical transmembrane segment spans residues 277-295; the sequence is FWAHYLRLGPHTILTLVFW. Over 296–306 the chain is Mitochondrial intermembrane; sequence EQFKKLFSGEL.

Belongs to the mitochondrial carrier (TC 2.A.29) family.

Its subcellular location is the mitochondrion inner membrane. Functionally, mitochondrial solute carriers shuttle metabolites, nucleotides, and cofactors through the mitochondrial inner membrane. Transports oxaloacetate and sulfate. The chain is Mitochondrial substrate carrier family protein ucpA (ucpA) from Dictyostelium discoideum (Social amoeba).